Reading from the N-terminus, the 166-residue chain is Deglycase PH1704 (166 aa).

The PfpI endopeptidase domain occupies 1-166 (MKVLFLTANE…WMREFVKLLK (166 aa)). Residue C100 is the Nucleophile of the active site. H101 is an active-site residue.

This sequence belongs to the peptidase C56 family. Homohexamer formed by a dimer of trimers that assemble into a hollow ring structure.

It localises to the cytoplasm. It carries out the reaction N(omega)-(1-hydroxy-2-oxopropyl)-L-arginyl-[protein] + H2O = lactate + L-arginyl-[protein] + H(+). It catalyses the reaction N(6)-(1-hydroxy-2-oxopropyl)-L-lysyl-[protein] + H2O = lactate + L-lysyl-[protein] + H(+). The catalysed reaction is S-(1-hydroxy-2-oxopropyl)-L-cysteinyl-[protein] + H2O = lactate + L-cysteinyl-[protein] + H(+). The enzyme catalyses N(omega)-(1-hydroxy-2-oxoethyl)-L-arginyl-[protein] + H2O = L-arginyl-[protein] + glycolate + H(+). It carries out the reaction N(6)-(1-hydroxy-2-oxoethyl)-L-lysyl-[protein] + H2O = glycolate + L-lysyl-[protein] + H(+). It catalyses the reaction S-(1-hydroxy-2-oxoethyl)-L-cysteinyl-[protein] + H2O = glycolate + L-cysteinyl-[protein] + H(+). Deglycase that catalyzes the deglycation of the Maillard adducts formed between amino groups of proteins and reactive carbonyl groups of glyoxals. Thus, functions as a protein deglycase that repairs methylglyoxal- and glyoxal-glycated proteins, and releases repaired proteins and lactate or glycolate, respectively. Deglycates cysteine, arginine and lysine residues in proteins, and thus reactivates these proteins by reversing glycation by glyoxals. Acts on early glycation intermediates (hemithioacetals and aminocarbinols), preventing the formation of advanced glycation endproducts (AGE) that cause irreversible damage. Also displays proteolytic activity. This Pyrococcus horikoshii (strain ATCC 700860 / DSM 12428 / JCM 9974 / NBRC 100139 / OT-3) protein is Deglycase PH1704.